The following is a 539-amino-acid chain: Probable protein kinase UbiB (539 aa).

A helical membrane pass occupies residues 23–43; the sequence is DLLFALPLPWWMLAVRFVLPW. The region spanning 125–492 is the Protein kinase domain; the sequence is RFDETPLASA…WHDRKDEPVL (368 aa). Residues 131-139 and lysine 153 each bind ATP; that span reads LASASVAQV. Aspartate 288 serves as the catalytic Proton acceptor. 2 helical membrane passes run 494–514 and 517–537; these read LIGA…SEAA and LLTL…YLIV.

The protein belongs to the ABC1 family. UbiB subfamily.

Its subcellular location is the cell inner membrane. Its pathway is cofactor biosynthesis; ubiquinone biosynthesis [regulation]. Is probably a protein kinase regulator of UbiI activity which is involved in aerobic coenzyme Q (ubiquinone) biosynthesis. In Pseudomonas syringae pv. tomato (strain ATCC BAA-871 / DC3000), this protein is Probable protein kinase UbiB.